A 734-amino-acid polypeptide reads, in one-letter code: Meiotic driver SPOK1 (734 aa).

A coiled-coil region spans residues K4 to E41. 2 disordered regions span residues E180–N222 and L414–P499. Over residues S416 to T429 the composition is skewed to polar residues. Over residues N457–E468 the composition is skewed to basic and acidic residues.

It is found in the cytoplasm. Its subcellular location is the nucleus. Functionally, promotes unequal transmission of alleles from the parental zygote to progeny spores by acting as poison/antidote system, leading to poisoning of progeny that do not inherit the allele. May possess DNA nuclease activity that leads to spore killing, and a kinase activity that confers resistance to the nuclease activity. Can suppress meiotic drive by the P.anserina SPOK2, SPOK3 and SPOK4 proteins. This Podospora comata protein is Meiotic driver SPOK1.